Here is a 204-residue protein sequence, read N- to C-terminus: LexA repressor (204 aa).

Positions 29–49 (VREICKGVGLSSTSSVHGHLS) form a DNA-binding region, H-T-H motif. Catalysis depends on for autocatalytic cleavage activity residues S126 and K163.

Belongs to the peptidase S24 family. As to quaternary structure, homodimer.

The enzyme catalyses Hydrolysis of Ala-|-Gly bond in repressor LexA.. Functionally, represses a number of genes involved in the response to DNA damage (SOS response), including recA and lexA. In the presence of single-stranded DNA, RecA interacts with LexA causing an autocatalytic cleavage which disrupts the DNA-binding part of LexA, leading to derepression of the SOS regulon and eventually DNA repair. The polypeptide is LexA repressor (Clostridium novyi (strain NT)).